Reading from the N-terminus, the 396-residue chain is Bone morphogenetic protein 2 (396 aa).

Residues 1–23 (MVAGTRCLLALLLPQVLLGGAAG) form the signal peptide. A propeptide spans 24–282 (LIPELGRRKF…GHPLHRREKR (259 aa)) (cleaved by PCSK5). Position 87 is a phosphoserine (S87). Residues N135, N163, N164, and N200 are each glycosylated (N-linked (GlcNAc...) asparagine). Residues 272 to 293 (KGHPLHRREKRQAKHKQRKRLK) are disordered. Over residues 274-293 (HPLHRREKRQAKHKQRKRLK) the composition is skewed to basic residues. 3 cysteine pairs are disulfide-bonded: C296–C361, C325–C393, and C329–C395. N-linked (GlcNAc...) asparagine glycosylation is present at N338.

It belongs to the TGF-beta family. In terms of assembly, homodimer; disulfide-linked. Interacts with SOSTDC1. Interacts with GREM2, RGMA, RGMB and RGMC. Interacts with ASPN. Interacts with MAFP5. Interacts with FBN1 (via N-terminal domain) and FBN2. Interacts with type I receptor BMPR1A. Interacts with type II receptor BMPR2. Interacts with ERFE. Interacts with BMPR1A/ALK3; the interaction may induce HAMP expression. Interacts with TGFBR3.

The protein resides in the secreted. Its function is as follows. Growth factor of the TGF-beta superfamily that plays essential roles in many developmental processes, including cardiogenesis, neurogenesis, and osteogenesis. Induces cartilage and bone formation. Initiates the canonical BMP signaling cascade by associating with type I receptor BMPR1A and type II receptor BMPR2. Once all three components are bound together in a complex at the cell surface, BMPR2 phosphorylates and activates BMPR1A. In turn, BMPR1A propagates signal by phosphorylating SMAD1/5/8 that travel to the nucleus and act as activators and repressors of transcription of target genes. Also acts to promote expression of HAMP, via the interaction with its receptor BMPR1A/ALK3. Can also signal through non-canonical pathways such as ERK/MAP kinase signaling cascade that regulates osteoblast differentiation. Also stimulates the differentiation of myoblasts into osteoblasts via the EIF2AK3-EIF2A-ATF4 pathway by stimulating EIF2A phosphorylation which leads to increased expression of ATF4 which plays a central role in osteoblast differentiation. Acts as a positive regulator of odontoblast differentiation during mesenchymal tooth germ formation, expression is repressed during the bell stage by MSX1-mediated inhibition of CTNNB1 signaling. In Dama dama (Fallow deer), this protein is Bone morphogenetic protein 2 (BMP2).